The chain runs to 880 residues: DNA-directed RNA polymerase subunit Rpo1N (880 aa).

8 residues coordinate Zn(2+): cysteine 58, cysteine 61, cysteine 68, histidine 71, cysteine 98, cysteine 101, cysteine 146, and cysteine 149. Residues aspartate 456, aspartate 458, and aspartate 460 each coordinate Mg(2+). The Zn(2+) site is built by arginine 573, cysteine 575, cysteine 580, histidine 582, and serine 584.

It belongs to the RNA polymerase beta' chain family. As to quaternary structure, part of the 13-subunit RNA polymerase complex. Interacts with TFS4. In terms of assembly, (Microbial infection) Binds viral protein RIP, which blocks global transcription. The cofactor is Mg(2+). Requires Zn(2+) as cofactor.

It localises to the cytoplasm. It carries out the reaction RNA(n) + a ribonucleoside 5'-triphosphate = RNA(n+1) + diphosphate. With respect to regulation, (Microbial infection) Binds to viral protein RIP (AC Q3V4R7), which inhibits global transcription. Functionally, DNA-dependent RNA polymerase (RNAP) catalyzes the transcription of DNA into RNA using the four ribonucleoside triphosphates as substrates. Forms the clamp head domain. In Sulfolobus acidocaldarius (strain ATCC 33909 / DSM 639 / JCM 8929 / NBRC 15157 / NCIMB 11770), this protein is DNA-directed RNA polymerase subunit Rpo1N.